Reading from the N-terminus, the 319-residue chain is Putative ribose-phosphate pyrophosphokinase 2 (319 aa).

ATP contacts are provided by residues 40–42 and 99–100; these read DGE and RQ. Mg(2+) is bound at residue His133. D-ribose 5-phosphate contacts are provided by residues Asp222 and 226 to 230; that span reads NTGRT.

This sequence belongs to the ribose-phosphate pyrophosphokinase family. Class I subfamily. In terms of assembly, homohexamer. The cofactor is Mg(2+).

The protein localises to the cytoplasm. It catalyses the reaction D-ribose 5-phosphate + ATP = 5-phospho-alpha-D-ribose 1-diphosphate + AMP + H(+). It participates in metabolic intermediate biosynthesis; 5-phospho-alpha-D-ribose 1-diphosphate biosynthesis; 5-phospho-alpha-D-ribose 1-diphosphate from D-ribose 5-phosphate (route I): step 1/1. Its function is as follows. Involved in the biosynthesis of the central metabolite phospho-alpha-D-ribosyl-1-pyrophosphate (PRPP) via the transfer of pyrophosphoryl group from ATP to 1-hydroxyl of ribose-5-phosphate (Rib-5-P). This is Putative ribose-phosphate pyrophosphokinase 2 from Streptococcus pneumoniae serotype 4 (strain ATCC BAA-334 / TIGR4).